The chain runs to 101 residues: MAKTSAVNRNKMRERMASRDKAKRAALKAIVMDRSLPVEDRFEATLRLAQLPRNGAANRVRLRCELTGRPRANYRKFKLCRVALRDLASSGQIPGLVKASW.

Positions 1-20 are disordered; it reads MAKTSAVNRNKMRERMASRD. The span at 11 to 20 shows a compositional bias: basic and acidic residues; it reads KMRERMASRD.

The protein belongs to the universal ribosomal protein uS14 family. As to quaternary structure, part of the 30S ribosomal subunit. Contacts proteins S3 and S10.

Binds 16S rRNA, required for the assembly of 30S particles and may also be responsible for determining the conformation of the 16S rRNA at the A site. This Granulibacter bethesdensis (strain ATCC BAA-1260 / CGDNIH1) protein is Small ribosomal subunit protein uS14.